Reading from the N-terminus, the 1478-residue chain is Serine/threonine-protein kinase BCK1/SLK1/SSP31 (1478 aa).

4 disordered regions span residues 1-70, 99-126, 217-359, and 373-427; these read MPFL…TSSQ, TSFT…GGNS, NVTN…RRHH, and FGSG…KGNL. Over residues 29–49 the composition is skewed to low complexity; it reads PTSSVASTKSSSKSPRATSRK. Polar residues-rich tracts occupy residues 58-70 and 99-110; these read QFPN…TSSQ and TSFTNSSYKNDN. A compositionally biased stretch (low complexity) spans 111–126; the sequence is GPSSLSDSRKSSGGNS. Residues 223-233 show a composition bias toward basic residues; sequence IRQKSASKLKS. Composition is skewed to polar residues over residues 253–273 and 281–297; these read DISN…SGPS and LHST…SSLY. 2 stretches are compositionally biased toward low complexity: residues 298 to 320 and 342 to 353; these read RRSF…SPSN and SASPPASPSYPS. Polar residues-rich tracts occupy residues 386-396 and 407-420; these read NPQGHSLSSEN and TNVS…SLPT. T407 is modified (phosphothreonine). Phosphoserine occurs at positions 411 and 491. Residues 644-671 form a disordered region; it reads KPKPAPLTSENNVPLKSVKSKSSMRSGT. Low complexity predominate over residues 659 to 671; sequence KSVKSKSSMRSGT. Phosphoserine is present on S747. 4 disordered regions span residues 752–877, 895–939, 960–1021, and 1053–1116; these read LNLP…ASTH, KTDQ…RGNS, ADAP…TQDK, and TEGI…TPKR. Residues 765–777 are compositionally biased toward polar residues; that stretch reads TPITENESKSSFQ. Positions 779–809 are enriched in basic and acidic residues; it reads LRKDEGTEIDFNHRRESPYTKPELAPKREAP. The span at 813-827 shows a compositional bias: polar residues; that stretch reads ANTSPQRTLSTSKQN. The residue at position 816 (S816) is a Phosphoserine. Low complexity-rich tracts occupy residues 851–870 and 914–925; these read QLLS…LTSS and NRSNSTVSTSNS. Residues 967-977 show a composition bias toward acidic residues; that stretch reads DSDDSDDDSSS. Basic and acidic residues predominate over residues 994 to 1011; the sequence is NENKKDEKSDNSSTHSDE. Phosphoserine occurs at positions 1058 and 1061. The segment covering 1058 to 1083 has biased composition (low complexity); sequence SPTSPKSLDSLLSPKNVASSRTEPST. S1134 carries the post-translational modification Phosphoserine; by PKC. The Protein kinase domain occupies 1175–1440; the sequence is WMKGEMIGKG…ANELLSHPFS (266 aa). ATP is bound by residues 1181-1189 and K1204; that span reads IGKGSFGAV. D1303 functions as the Proton acceptor in the catalytic mechanism.

It belongs to the protein kinase superfamily. STE Ser/Thr protein kinase family. MAP kinase kinase kinase subfamily.

The protein localises to the cytoplasm. It carries out the reaction L-seryl-[protein] + ATP = O-phospho-L-seryl-[protein] + ADP + H(+). The enzyme catalyses L-threonyl-[protein] + ATP = O-phospho-L-threonyl-[protein] + ADP + H(+). Functionally, serine/threonine protein kinase involved in a signal transduction pathway that plays a role in yeast cell morphogenesis and cell growth. This pathway seems to start by SMP3; then involve the kinase PKC1 that may act on this kinase. BCK1 probably phosphorylates MKK1 and MKK2 which themselves phosphorylate the MPK1 kinase. The polypeptide is Serine/threonine-protein kinase BCK1/SLK1/SSP31 (BCK1) (Saccharomyces cerevisiae (strain ATCC 204508 / S288c) (Baker's yeast)).